We begin with the raw amino-acid sequence, 430 residues long: Lipoyl synthase, mitochondrial (430 aa).

A mitochondrion-targeting transit peptide spans Met1–Tyr37. The span at Thr39 to Pro55 shows a compositional bias: polar residues. A disordered region spans residues Thr39–Arg59. Positions 141, 146, 152, 172, 176, 179, and 387 each coordinate [4Fe-4S] cluster. In terms of domain architecture, Radical SAM core spans Gly155–Leu376.

This sequence belongs to the radical SAM superfamily. Lipoyl synthase family. [4Fe-4S] cluster serves as cofactor.

It is found in the mitochondrion. The catalysed reaction is [[Fe-S] cluster scaffold protein carrying a second [4Fe-4S](2+) cluster] + N(6)-octanoyl-L-lysyl-[protein] + 2 oxidized [2Fe-2S]-[ferredoxin] + 2 S-adenosyl-L-methionine + 4 H(+) = [[Fe-S] cluster scaffold protein] + N(6)-[(R)-dihydrolipoyl]-L-lysyl-[protein] + 4 Fe(3+) + 2 hydrogen sulfide + 2 5'-deoxyadenosine + 2 L-methionine + 2 reduced [2Fe-2S]-[ferredoxin]. It participates in protein modification; protein lipoylation via endogenous pathway; protein N(6)-(lipoyl)lysine from octanoyl-[acyl-carrier-protein]: step 2/2. In terms of biological role, catalyzes the radical-mediated insertion of two sulfur atoms into the C-6 and C-8 positions of the octanoyl moiety bound to the lipoyl domains of lipoate-dependent enzymes, thereby converting the octanoylated domains into lipoylated derivatives. The sequence is that of Lipoyl synthase, mitochondrial from Ajellomyces capsulatus (strain H143) (Darling's disease fungus).